A 351-amino-acid chain; its full sequence is uncharacterized protein (351 aa).

Mn(2+)-binding residues include Asp215, Asp226, His290, Glu319, and Glu333.

This sequence belongs to the peptidase M24B family. Requires Mn(2+) as cofactor.

This is an uncharacterized protein from Staphylococcus epidermidis (strain ATCC 35984 / DSM 28319 / BCRC 17069 / CCUG 31568 / BM 3577 / RP62A).